Here is a 254-residue protein sequence, read N- to C-terminus: 23S rRNA (guanosine-2'-O-)-methyltransferase RlmB (254 aa).

Positions 198, 218, and 227 each coordinate S-adenosyl-L-methionine.

Belongs to the class IV-like SAM-binding methyltransferase superfamily. RNA methyltransferase TrmH family. RlmB subfamily. Homodimer.

The protein resides in the cytoplasm. It catalyses the reaction guanosine(2251) in 23S rRNA + S-adenosyl-L-methionine = 2'-O-methylguanosine(2251) in 23S rRNA + S-adenosyl-L-homocysteine + H(+). Its function is as follows. Specifically methylates the ribose of guanosine 2251 in 23S rRNA. The polypeptide is 23S rRNA (guanosine-2'-O-)-methyltransferase RlmB (Blochmanniella floridana).